The chain runs to 545 residues: T-complex protein 1 subunit alpha (545 aa).

An N-acetylserine modification is found at serine 2.

Belongs to the TCP-1 chaperonin family. As to quaternary structure, heterooligomeric complex of about 850 to 900 kDa that forms two stacked rings, 12 to 16 nm in diameter.

The protein localises to the cytoplasm. Functionally, molecular chaperone; assists the folding of proteins upon ATP hydrolysis. Known to play a role, in vitro, in the folding of actin and tubulin. This chain is T-complex protein 1 subunit alpha, found in Arabidopsis thaliana (Mouse-ear cress).